Here is an 81-residue protein sequence, read N- to C-terminus: Conotoxin ViKr92 (81 aa).

The first 22 residues, 1–22 (MKLTWMMIVAVLFLTAWTFVTA), serve as a signal peptide directing secretion. A propeptide spanning residues 23-51 (DDTRYKLENPFLKARNELQKLEASQLNER) is cleaved from the precursor. Cystine bridges form between cysteine 53–cysteine 70, cysteine 60–cysteine 74, and cysteine 69–cysteine 78.

This sequence belongs to the conotoxin O1 superfamily. In terms of tissue distribution, expressed by the venom duct.

The protein resides in the secreted. The polypeptide is Conotoxin ViKr92 (Conus virgo (Virgin cone)).